A 908-amino-acid chain; its full sequence is Protein translocase subunit SecA (908 aa).

ATP is bound by residues glutamine 87, 105–109, and aspartate 512; that span reads GEGKT. The segment at 865-908 is disordered; that stretch reads GGDDGSDEMMAHTPMIRDGDKVGRNDPCPCGSGRKYKQCHGKLS. Residues 879-888 are compositionally biased toward basic and acidic residues; sequence MIRDGDKVGR. Zn(2+) is bound by residues cysteine 892, cysteine 894, cysteine 903, and histidine 904. Basic residues predominate over residues 898–908; it reads RKYKQCHGKLS.

It belongs to the SecA family. Monomer and homodimer. Part of the essential Sec protein translocation apparatus which comprises SecA, SecYEG and auxiliary proteins SecDF-YajC and YidC. Zn(2+) serves as cofactor.

Its subcellular location is the cell inner membrane. The protein localises to the cytoplasm. It carries out the reaction ATP + H2O + cellular proteinSide 1 = ADP + phosphate + cellular proteinSide 2.. Part of the Sec protein translocase complex. Interacts with the SecYEG preprotein conducting channel. Has a central role in coupling the hydrolysis of ATP to the transfer of proteins into and across the cell membrane, serving both as a receptor for the preprotein-SecB complex and as an ATP-driven molecular motor driving the stepwise translocation of polypeptide chains across the membrane. This is Protein translocase subunit SecA from Shewanella sp. (strain ANA-3).